A 407-amino-acid chain; its full sequence is Phosphopentomutase (407 aa).

Mn(2+) is bound by residues Asp11, Asp305, His310, Asp346, His347, and His358.

This sequence belongs to the phosphopentomutase family. It depends on Mn(2+) as a cofactor.

It is found in the cytoplasm. The catalysed reaction is 2-deoxy-alpha-D-ribose 1-phosphate = 2-deoxy-D-ribose 5-phosphate. It catalyses the reaction alpha-D-ribose 1-phosphate = D-ribose 5-phosphate. It participates in carbohydrate degradation; 2-deoxy-D-ribose 1-phosphate degradation; D-glyceraldehyde 3-phosphate and acetaldehyde from 2-deoxy-alpha-D-ribose 1-phosphate: step 1/2. Isomerase that catalyzes the conversion of deoxy-ribose 1-phosphate (dRib-1-P) and ribose 1-phosphate (Rib-1-P) to deoxy-ribose 5-phosphate (dRib-5-P) and ribose 5-phosphate (Rib-5-P), respectively. In Legionella pneumophila subsp. pneumophila (strain Philadelphia 1 / ATCC 33152 / DSM 7513), this protein is Phosphopentomutase.